The primary structure comprises 705 residues: Polyribonucleotide nucleotidyltransferase (705 aa).

Mg(2+) is bound by residues Asp486 and Asp492. The 60-residue stretch at 553–612 (PRIHTIRINPDKIKDVIGKGGSVIRALTEETGTTIEIEDDGTVKIAATDGEKAKFAIRRI) folds into the KH domain. Residues 622-690 (GRIYQGKVTR…RQGRVRLSIK (69 aa)) form the S1 motif domain.

Belongs to the polyribonucleotide nucleotidyltransferase family. Component of the RNA degradosome, which is a multiprotein complex involved in RNA processing and mRNA degradation. It depends on Mg(2+) as a cofactor.

The protein resides in the cytoplasm. It catalyses the reaction RNA(n+1) + phosphate = RNA(n) + a ribonucleoside 5'-diphosphate. In terms of biological role, involved in mRNA degradation. Catalyzes the phosphorolysis of single-stranded polyribonucleotides processively in the 3'- to 5'-direction. The sequence is that of Polyribonucleotide nucleotidyltransferase from Serratia proteamaculans (strain 568).